Here is a 316-residue protein sequence, read N- to C-terminus: E3 ubiquitin-protein ligase rnf146 (316 aa).

An RING-type zinc finger spans residues 36–74; it reads CAICLQTCVHPVSLPCKHIFCYLCVKGASWLGRRCALCR. The region spanning 91 to 167 is the WWE domain; that stretch reads EELKSASRGN…EHGRRRKIKR (77 aa). A glycoprotein-binding residues include Tyr107, Arg110, Trp114, Tyr144, Gln153, Arg163, and Lys175. Residues 257–316 are disordered; sequence GRNNIGEGEEGQPLINARMPAPSALLEESEPSDSNDHGSPTLQHNSLLVPQSNRLPFGNP. Over residues 293–310 the composition is skewed to polar residues; that stretch reads HGSPTLQHNSLLVPQSNR.

The protein localises to the cytoplasm. It is found in the cytosol. It localises to the nucleus. It carries out the reaction S-ubiquitinyl-[E2 ubiquitin-conjugating enzyme]-L-cysteine + [acceptor protein]-L-lysine = [E2 ubiquitin-conjugating enzyme]-L-cysteine + N(6)-ubiquitinyl-[acceptor protein]-L-lysine.. It participates in protein modification; protein ubiquitination. In terms of biological role, E3 ubiquitin-protein ligase that specifically binds poly-ADP-ribosylated proteins and mediates their ubiquitination and subsequent degradation. May regulate many important biological processes, such as cell survival and DNA damage response. Acts as an activator of the Wnt signaling pathway by mediating the ubiquitination of poly-ADP-ribosylated proteins. Neuroprotective protein. Protects against cell death induced by DNA damaging agents and rescues cells from G1 arrest. Promotes cell survival after gamma-irradiation. Facilitates DNA repair. The protein is E3 ubiquitin-protein ligase rnf146 (rnf146) of Xenopus tropicalis (Western clawed frog).